Here is a 392-residue protein sequence, read N- to C-terminus: Carbamoyl phosphate synthase small chain (392 aa).

The tract at residues 1 to 174 (MSKKALLALE…EVIVENPEGD (174 aa)) is CPSase. 3 residues coordinate L-glutamine: S47, G224, and G226. The Glutamine amidotransferase type-1 domain occupies 176–392 (SVVVLDSGVK…EFKRLIKEVR (217 aa)). C252 functions as the Nucleophile in the catalytic mechanism. 5 residues coordinate L-glutamine: L253, Q256, N294, G296, and F297. Catalysis depends on residues H367 and E369.

The protein belongs to the CarA family. In terms of assembly, composed of two chains; the small (or glutamine) chain promotes the hydrolysis of glutamine to ammonia, which is used by the large (or ammonia) chain to synthesize carbamoyl phosphate. Tetramer of heterodimers (alpha,beta)4.

The enzyme catalyses hydrogencarbonate + L-glutamine + 2 ATP + H2O = carbamoyl phosphate + L-glutamate + 2 ADP + phosphate + 2 H(+). The catalysed reaction is L-glutamine + H2O = L-glutamate + NH4(+). It functions in the pathway amino-acid biosynthesis; L-arginine biosynthesis; carbamoyl phosphate from bicarbonate: step 1/1. It participates in pyrimidine metabolism; UMP biosynthesis via de novo pathway; (S)-dihydroorotate from bicarbonate: step 1/3. Its function is as follows. Small subunit of the glutamine-dependent carbamoyl phosphate synthetase (CPSase). CPSase catalyzes the formation of carbamoyl phosphate from the ammonia moiety of glutamine, carbonate, and phosphate donated by ATP, constituting the first step of 2 biosynthetic pathways, one leading to arginine and/or urea and the other to pyrimidine nucleotides. The small subunit (glutamine amidotransferase) binds and cleaves glutamine to supply the large subunit with the substrate ammonia. The polypeptide is Carbamoyl phosphate synthase small chain (Thermotoga maritima (strain ATCC 43589 / DSM 3109 / JCM 10099 / NBRC 100826 / MSB8)).